Here is an 832-residue protein sequence, read N- to C-terminus: Thymine dioxygenase JBP1-A (832 aa).

Residues Met1 to Met12 are compositionally biased toward basic and acidic residues. The segment at Met1–Lys24 is disordered. The tract at residues Val80–Ala282 is thymine dioxygenase. Residues His207, Asp209, and His257 each contribute to the Fe cation site. Position 273 (Arg273) interacts with 2-oxoglutarate. The tract at residues Leu409–Ser578 is DNA-binding JBP1 domain.

The protein belongs to the TET family. JBP1 subfamily. As to quaternary structure, monomer. Binds to DNA as a monomer. The cofactor is Fe(2+).

The protein localises to the nucleus. It catalyses the reaction thymine + 2-oxoglutarate + O2 = 5-hydroxymethyluracil + succinate + CO2. Functionally, dioxygenase that catalyzes the first step of DNA base J (beta-d-glucosyl-HOMedU) biosynthesis by converting thymine to 5-hydroxymethyluracil (HOMedU). DNA base J is a hypermodified thymidine residue found in the genome of kinetoplastid parasites, which is localized primarily to repetitive DNA, namely the telomeres, and is implicated in the regulation of antigenic variation. Also specifically binds to base J-containing DNA (J-DNA). Involved in propagation and maintenance of DNA base J synthesis initiated by JBP2 by specifically binding already synthesized DNA base J and propagating J synthesis. Thymine dioxygenase activity and J-DNA-binding are independent functions. The sequence is that of Thymine dioxygenase JBP1-A (JBP1A) from Trypanosoma cruzi (strain CL Brener).